The following is a 456-amino-acid chain: ATP synthase subunit beta 1 (456 aa).

Position 152 to 159 (152 to 159 (GGAGVGKS)) interacts with ATP.

Belongs to the ATPase alpha/beta chains family. F-type ATPases have 2 components, CF(1) - the catalytic core - and CF(0) - the membrane proton channel. CF(1) has five subunits: alpha(3), beta(3), gamma(1), delta(1), epsilon(1). CF(0) has three main subunits: a(1), b(2) and c(9-12). The alpha and beta chains form an alternating ring which encloses part of the gamma chain. CF(1) is attached to CF(0) by a central stalk formed by the gamma and epsilon chains, while a peripheral stalk is formed by the delta and b chains.

Its subcellular location is the cell membrane. It catalyses the reaction ATP + H2O + 4 H(+)(in) = ADP + phosphate + 5 H(+)(out). Produces ATP from ADP in the presence of a proton gradient across the membrane. The catalytic sites are hosted primarily by the beta subunits. In Listeria monocytogenes serotype 4b (strain F2365), this protein is ATP synthase subunit beta 1.